The sequence spans 443 residues: ATP-dependent protease ATPase subunit HslU (443 aa).

ATP-binding positions include Ile18, Gly60–Glu65, Asp256, Glu321, and Arg393.

This sequence belongs to the ClpX chaperone family. HslU subfamily. As to quaternary structure, a double ring-shaped homohexamer of HslV is capped on each side by a ring-shaped HslU homohexamer. The assembly of the HslU/HslV complex is dependent on binding of ATP.

The protein resides in the cytoplasm. Its function is as follows. ATPase subunit of a proteasome-like degradation complex; this subunit has chaperone activity. The binding of ATP and its subsequent hydrolysis by HslU are essential for unfolding of protein substrates subsequently hydrolyzed by HslV. HslU recognizes the N-terminal part of its protein substrates and unfolds these before they are guided to HslV for hydrolysis. In Tolumonas auensis (strain DSM 9187 / NBRC 110442 / TA 4), this protein is ATP-dependent protease ATPase subunit HslU.